A 509-amino-acid polypeptide reads, in one-letter code: Proto-oncogene tyrosine-protein kinase LCK (509 aa).

The N-myristoyl glycine moiety is linked to residue glycine 2. The interactions with CD4 and CD8 stretch occupies residues 2–72 (GCVCSSNPED…DNLVIALHSY (71 aa)). S-palmitoyl cysteine attachment occurs at residues cysteine 3 and cysteine 5. In terms of domain architecture, SH3 spans 61–121 (LQDNLVIALH…PFNFVAKANS (61 aa)). Residue lysine 99 forms a Glycyl lysine isopeptide (Lys-Gly) (interchain with G-Cter in ubiquitin) linkage. Phosphoserine is present on serine 102. The region spanning 127-224 (WFFKNLSRKD…GLCTKLSRPC (98 aa)) is the SH2 domain. The tract at residues 154–242 (RESESTAGSF…WWEDEWEVPR (89 aa)) is interaction with PTPRH. At threonine 159 the chain carries Phosphothreonine. Serine 162 is subject to Phosphoserine. Tyrosine 192 bears the Phosphotyrosine mark. A Phosphoserine modification is found at serine 194. The region spanning 245 to 498 (LKLVERLGAG…YLRSVLDDFF (254 aa)) is the Protein kinase domain. Residues 251-259 (LGAGQFGEV) and lysine 273 contribute to the ATP site. Residue lysine 276 forms a Glycyl lysine isopeptide (Lys-Gly) (interchain with G-Cter in ubiquitin) linkage. The active-site Proton acceptor is the aspartate 364. Position 394 is a phosphotyrosine; by autocatalysis (tyrosine 394). Tyrosine 505 carries the post-translational modification Phosphotyrosine.

The protein belongs to the protein kinase superfamily. Tyr protein kinase family. SRC subfamily. Binds to the cytoplasmic domain of cell surface receptors, such as AXL, CD2, CD4, CD5, CD8, CD44, CD45 and CD122. Also binds to effector molecules, such as PI4K, VAV1, RASA1, FYB1 and to other protein kinases including CDK1, RAF1, ZAP70 and SYK. Binds to phosphatidylinositol 3'-kinase (PI3K) from T-lymphocytes through its SH3 domain and to the tyrosine phosphorylated form of KHDRBS1/p70 through its SH2 domain. Interacts with SQSTM1. Interacts with phosphorylated LIME1. Interacts with CBLB and PTPRH. Interacts with RUNX3. Forms a signaling complex with EPHA1, PTK2B and PI3-KINASE; upon activation by EFNA1 which may regulate T-lymphocytes migration. Associates with ZAP70 and RHOH; these interactions allow LCK-mediated RHOH and CD3 subunit phosphorylations in presence of a functional ZAP70. Interacts with CEACAM1 (via cytoplasmic domain); mediates CEACAM1 phosphorylation resulting in PTPN6 recruitment that dephosphorylates TCR stimulation-induced CD247 and ZAP70. Interacts with FYB2. Interacts with CD160. Interacts with CD48. Post-translationally, autophosphorylated on Tyr-394, increasing enzymatic activity, this site is dephosphorylated by PTN22. Phosphorylated on Tyr-505 by CSK, decreasing activity. Dephosphorylated by PTPRC/CD45. Dephosphorylation at Tyr-394 by PTPN2 negatively regulates T-cells differentiation. Dephosphorylation at Tyr-394 by DUSP22 negatively regulates T-cell receptor signaling. Myristoylation is required prior to palmitoylation. In terms of processing, palmitoylation regulates association with the plasma membrane and could be mediated by ZDHHC2. Post-translationally, 'Lys-63'-linked ubiquitinated at Lys-99 and Lys-276 by UBR2; this modification is required for autophosphorylation at Tyr-394.

The protein localises to the cell membrane. The protein resides in the cytoplasm. It localises to the cytosol. It carries out the reaction L-tyrosyl-[protein] + ATP = O-phospho-L-tyrosyl-[protein] + ADP + H(+). With respect to regulation, the relative activities of the inhibitory tyrosine-protein kinase CSK and the activating tyrosine-protein phosphatase PTPRC/CD45 determine the level of LCK activity. These interactions allow rapid and efficient activation of LCK in response to TCR stimulation. Functionally, non-receptor tyrosine-protein kinase that plays an essential role in the selection and maturation of developing T-cells in the thymus and in the function of mature T-cells. Plays a key role in T-cell antigen receptor (TCR)-linked signal transduction pathways. Constitutively associated with the cytoplasmic portions of the CD4 and CD8 surface receptors. Association of the TCR with a peptide antigen-bound MHC complex facilitates the interaction of CD4 and CD8 with MHC class II and class I molecules, respectively, thereby recruiting the associated LCK protein to the vicinity of the TCR/CD3 complex. LCK then phosphorylates tyrosine residues within the immunoreceptor tyrosine-based activation motifs (ITAM) of the cytoplasmic tails of the TCR-gamma chains and CD3 subunits, initiating the TCR/CD3 signaling pathway. Once stimulated, the TCR recruits the tyrosine kinase ZAP70, that becomes phosphorylated and activated by LCK. Following this, a large number of signaling molecules are recruited, ultimately leading to lymphokine production. LCK also contributes to signaling by other receptor molecules. Associates directly with the cytoplasmic tail of CD2, which leads to hyperphosphorylation and activation of LCK. Also plays a role in the IL2 receptor-linked signaling pathway that controls the T-cell proliferative response. Binding of IL2 to its receptor results in increased activity of LCK. Is expressed at all stages of thymocyte development and is required for the regulation of maturation events that are governed by both pre-TCR and mature alpha beta TCR. Phosphorylates other substrates including RUNX3, PTK2B/PYK2, the microtubule-associated protein MAPT, RHOH or TYROBP. Interacts with UNC119; this interaction plays a crucial role in activation of LCK. The chain is Proto-oncogene tyrosine-protein kinase LCK (Lck) from Rattus norvegicus (Rat).